A 240-amino-acid polypeptide reads, in one-letter code: Adapter protein MecA (240 aa).

Belongs to the MecA family. As to quaternary structure, homodimer.

Its function is as follows. Enables the recognition and targeting of unfolded and aggregated proteins to the ClpC protease or to other proteins involved in proteolysis. This Streptococcus mutans serotype c (strain ATCC 700610 / UA159) protein is Adapter protein MecA.